A 927-amino-acid chain; its full sequence is Translation initiation factor IF-2 (927 aa).

The segment at 27–337 (LGLPVKSHAS…GAPKPVTERK (311 aa)) is disordered. The span at 49-69 (SFSSSKTKAPTNSVQTNQGVK) shows a compositional bias: polar residues. Basic and acidic residues-rich tracts occupy residues 70 to 86 (TESK…DDKP) and 101 to 138 (FKAE…DRRH). Over residues 146-159 (GNRNDNRQGQQNNR) the composition is skewed to low complexity. Composition is skewed to basic and acidic residues over residues 160-171 (NKNDGRYADHKQ), 202-226 (YSRH…EQEL), and 234-257 (AQEE…KEIV). A compositionally biased stretch (low complexity) spans 300-316 (NWNNQNQVRNQRNSNWN). The tr-type G domain occupies 428 to 597 (ERPPVVTIMG…LLVAEMEELK (170 aa)). Residues 437-444 (GHVDHGKT) form a G1 region. 437 to 444 (GHVDHGKT) contributes to the GTP binding site. The tract at residues 462–466 (GITQH) is G2. The segment at 483-486 (DTPG) is G3. Residues 483–487 (DTPGH) and 537–540 (NKID) each bind GTP. The segment at 537-540 (NKID) is G4. The G5 stretch occupies residues 573–575 (SAK).

It belongs to the TRAFAC class translation factor GTPase superfamily. Classic translation factor GTPase family. IF-2 subfamily.

It localises to the cytoplasm. One of the essential components for the initiation of protein synthesis. Protects formylmethionyl-tRNA from spontaneous hydrolysis and promotes its binding to the 30S ribosomal subunits. Also involved in the hydrolysis of GTP during the formation of the 70S ribosomal complex. This is Translation initiation factor IF-2 from Streptococcus agalactiae serotype V (strain ATCC BAA-611 / 2603 V/R).